Consider the following 495-residue polypeptide: Lysine--tRNA ligase (495 aa).

The Mg(2+) site is built by Glu-406 and Glu-413.

The protein belongs to the class-II aminoacyl-tRNA synthetase family. As to quaternary structure, homodimer. Mg(2+) serves as cofactor.

Its subcellular location is the cytoplasm. The enzyme catalyses tRNA(Lys) + L-lysine + ATP = L-lysyl-tRNA(Lys) + AMP + diphosphate. This chain is Lysine--tRNA ligase, found in Staphylococcus aureus (strain MW2).